Consider the following 361-residue polypeptide: Peptide chain release factor 1 (361 aa).

Q236 is subject to N5-methylglutamine.

This sequence belongs to the prokaryotic/mitochondrial release factor family. Methylated by PrmC. Methylation increases the termination efficiency of RF1.

Its subcellular location is the cytoplasm. In terms of biological role, peptide chain release factor 1 directs the termination of translation in response to the peptide chain termination codons UAG and UAA. The sequence is that of Peptide chain release factor 1 from Lactobacillus delbrueckii subsp. bulgaricus (strain ATCC BAA-365 / Lb-18).